Here is a 268-residue protein sequence, read N- to C-terminus: Ribosomal RNA small subunit methyltransferase A (268 aa).

The S-adenosyl-L-methionine site is built by Asn18, Leu20, Gly45, Glu66, Asp91, and Asn112.

This sequence belongs to the class I-like SAM-binding methyltransferase superfamily. rRNA adenine N(6)-methyltransferase family. RsmA subfamily.

The protein localises to the cytoplasm. The enzyme catalyses adenosine(1518)/adenosine(1519) in 16S rRNA + 4 S-adenosyl-L-methionine = N(6)-dimethyladenosine(1518)/N(6)-dimethyladenosine(1519) in 16S rRNA + 4 S-adenosyl-L-homocysteine + 4 H(+). In terms of biological role, specifically dimethylates two adjacent adenosines (A1518 and A1519) in the loop of a conserved hairpin near the 3'-end of 16S rRNA in the 30S particle. May play a critical role in biogenesis of 30S subunits. This Shewanella oneidensis (strain ATCC 700550 / JCM 31522 / CIP 106686 / LMG 19005 / NCIMB 14063 / MR-1) protein is Ribosomal RNA small subunit methyltransferase A.